The following is a 367-amino-acid chain: Cyclin-Y-like protein 1 (367 aa).

A phosphoserine mark is found at Ser73, Ser111, and Ser118. The Cyclin N-terminal domain maps to 186-291 (EYFKHDPEHK…FLELLQFNIN (106 aa)). Residue Ser352 is modified to Phosphoserine.

The protein belongs to the cyclin family. Cyclin Y subfamily. Interacts with CDK16; this interaction mutually increases the stability of CDK16 and CCNYL1 and increases the kinase activity of CDK16. As to expression, highly expressed in the testis. Largely restricted to germ cells in the testis.

The protein resides in the cell membrane. Key regulator of Wnt signaling implicated in various biological processes including male fertility, embryonic neurogenesis and cortex development. Activates the cyclin-dependent kinase CDK16, and promotes sperm maturation. The chain is Cyclin-Y-like protein 1 from Mus musculus (Mouse).